Here is a 1091-residue protein sequence, read N- to C-terminus: Constitutive coactivator of PPAR-gamma-like protein 2 (1091 aa).

Residues 35 to 53 (QQQHLHRQLPPAALAPGAP) show a composition bias toward low complexity. Disordered regions lie at residues 35 to 105 (QQQH…HPPP), 503 to 575 (NCLT…SEPH), 966 to 1010 (SRSS…QGSS), and 1037 to 1077 (VEEK…KNHV). Arginine 57 is subject to Omega-N-methylarginine. Positions 82 to 95 (SRHHHPAHHFHHHG) are enriched in basic residues. Positions 532–544 (GSEQITEAVQQQP) are enriched in polar residues. The span at 966 to 976 (SRSSRSRGSFG) shows a compositional bias: low complexity. Arginine 972 bears the Omega-N-methylarginine mark. A compositionally biased stretch (basic and acidic residues) spans 1062-1077 (SDDHCLPVKNGEKNHV).

This sequence belongs to the constitutive coactivator of PPAR-gamma family.

The chain is Constitutive coactivator of PPAR-gamma-like protein 2 (Fam120c) from Mus musculus (Mouse).